Reading from the N-terminus, the 269-residue chain is CUE domain-containing protein 2-B (269 aa).

Positions 110–130 (ASPSEKTATEPLEGAVAQDKD) are disordered. The 44-residue stretch at 131–174 (DPKTGVDLLLEIFPSCTITQAQTALSMAKGDLEDAVQIIVDGKV) folds into the CUE domain.

Belongs to the CUEDC2 family. In terms of processing, phosphorylated.

The protein localises to the cytoplasm. It is found in the nucleus. May play a role in targeting proteins for ubiquitination and subsequent proteasomal degradation. In Xenopus laevis (African clawed frog), this protein is CUE domain-containing protein 2-B (cuedc2-b).